The primary structure comprises 441 residues: uncharacterized protein (441 aa).

An N-terminal signal peptide occupies residues 1 to 23; that stretch reads MSRKYLLSLLLVGALVISVVASG. Cysteine 24 is modified (N-acetylcysteine). Cysteine 24 carries the S-archaeol cysteine lipid modification.

The protein belongs to the bacterial solute-binding protein 1 family.

The protein resides in the cell membrane. Functionally, probably part of a binding-protein-dependent transport system PH1214/15/16. This is an uncharacterized protein from Pyrococcus horikoshii (strain ATCC 700860 / DSM 12428 / JCM 9974 / NBRC 100139 / OT-3).